Here is a 141-residue protein sequence, read N- to C-terminus: HTH-type transcriptional repressor NsrR (141 aa).

Residues 2–129 (QLTSFTDYGL…DNYTLADMVQ (128 aa)) enclose the HTH rrf2-type domain. Residues 28–51 (ISQVTEVYGVSRNHMVKIINQLSR) constitute a DNA-binding region (H-T-H motif). Residues Cys91, Cys96, and Cys102 each contribute to the [2Fe-2S] cluster site.

It depends on [2Fe-2S] cluster as a cofactor.

In terms of biological role, nitric oxide-sensitive repressor of genes involved in protecting the cell against nitrosative stress. May require iron for activity. In Yersinia enterocolitica serotype O:8 / biotype 1B (strain NCTC 13174 / 8081), this protein is HTH-type transcriptional repressor NsrR.